A 179-amino-acid polypeptide reads, in one-letter code: Large ribosomal subunit protein uL6 (179 aa).

It belongs to the universal ribosomal protein uL6 family. As to quaternary structure, part of the 50S ribosomal subunit.

Functionally, this protein binds to the 23S rRNA, and is important in its secondary structure. It is located near the subunit interface in the base of the L7/L12 stalk, and near the tRNA binding site of the peptidyltransferase center. This Bifidobacterium longum (strain DJO10A) protein is Large ribosomal subunit protein uL6.